A 264-amino-acid chain; its full sequence is tRNA (guanine-N(7)-)-methyltransferase (264 aa).

Positions 1–39 (MIHDDDPNAPGAPHDDATAAPASATRAAPAAGDDDDANP) are disordered. Residues 18–31 (TAAPASATRAAPAA) are compositionally biased toward low complexity. Glu-94, Glu-119, Asp-146, and Asp-169 together coordinate S-adenosyl-L-methionine. Residue Asp-169 is part of the active site. Substrate contacts are provided by residues Lys-173, Asp-205, and 240–243 (TKFE).

It belongs to the class I-like SAM-binding methyltransferase superfamily. TrmB family.

It catalyses the reaction guanosine(46) in tRNA + S-adenosyl-L-methionine = N(7)-methylguanosine(46) in tRNA + S-adenosyl-L-homocysteine. It participates in tRNA modification; N(7)-methylguanine-tRNA biosynthesis. Functionally, catalyzes the formation of N(7)-methylguanine at position 46 (m7G46) in tRNA. The polypeptide is tRNA (guanine-N(7)-)-methyltransferase (Burkholderia mallei (strain ATCC 23344)).